The primary structure comprises 260 residues: MAQSSKYQRKPRSGERKRSQRRLELTEEQKKQFDDLLVRTGLTFENRKLLIQAFTHSSYVNEQRIFSSSDNERLEFLGDAVLELAVSQYLFKTYKNMSEGDMTKLRASIVCEPSLARFAEELQFGKLVLLGKGEEVTGGRTRPALLADVFEAFIGALYMDQGLEPVFMFLARFMYPKIKEGAFTYKMDFKSQLQEFVQRDNRGQIRYLIVQERGPAHDREFVSDVQLNEETIGTGTGRSKKEAEQLAAKQALLALNQKES.

The interval 1-24 is disordered; that stretch reads MAQSSKYQRKPRSGERKRSQRRLE. The segment covering 12 to 24 has biased composition (basic and acidic residues); it reads RSGERKRSQRRLE. Positions 33–162 constitute an RNase III domain; the sequence is FDDLLVRTGL…FIGALYMDQG (130 aa). Residue E75 participates in Mg(2+) binding. The active site involves D79. D148 and E151 together coordinate Mg(2+). E151 is an active-site residue. A DRBM domain is found at 188–257; the sequence is DFKSQLQEFV…AKQALLALNQ (70 aa).

Belongs to the ribonuclease III family. Homodimer. The cofactor is Mg(2+).

Its subcellular location is the cytoplasm. The enzyme catalyses Endonucleolytic cleavage to 5'-phosphomonoester.. Its function is as follows. Digests double-stranded RNA. Involved in the processing of primary rRNA transcript to yield the immediate precursors to the large and small rRNAs (23S and 16S). Processes some mRNAs, and tRNAs when they are encoded in the rRNA operon. Processes pre-crRNA and tracrRNA of type II CRISPR loci if present in the organism. This is Ribonuclease 3 from Shouchella clausii (strain KSM-K16) (Alkalihalobacillus clausii).